Reading from the N-terminus, the 524-residue chain is Apoptosis inhibitor 5-A (524 aa).

Positions 1 to 360 (MATVEELYRS…HQLGRKLPDF (360 aa)) are ARM-like and Heat-like helical repeats. Residues 440-524 (TLSWKPVQRT…RGNRSRGRIY (85 aa)) are disordered. The short motif at 455 to 476 (KRTSDETSSTSPPKKPIVGPKR) is the Nuclear localization signal element. A compositionally biased stretch (gly residues) spans 503–516 (GFQGGRGRGWGGRG).

The protein belongs to the API5 family. Monomer.

The protein localises to the nucleus. Functionally, may be an antiapoptotic factor. This Xenopus laevis (African clawed frog) protein is Apoptosis inhibitor 5-A (api5-a).